A 156-amino-acid polypeptide reads, in one-letter code: ATP synthase subunit b (156 aa).

A helical membrane pass occupies residues 7–29 (LFAQMVVFLVLAWFTMKFVWPPL).

It belongs to the ATPase B chain family. F-type ATPases have 2 components, F(1) - the catalytic core - and F(0) - the membrane proton channel. F(1) has five subunits: alpha(3), beta(3), gamma(1), delta(1), epsilon(1). F(0) has three main subunits: a(1), b(2) and c(10-14). The alpha and beta chains form an alternating ring which encloses part of the gamma chain. F(1) is attached to F(0) by a central stalk formed by the gamma and epsilon chains, while a peripheral stalk is formed by the delta and b chains.

It is found in the cell inner membrane. Functionally, f(1)F(0) ATP synthase produces ATP from ADP in the presence of a proton or sodium gradient. F-type ATPases consist of two structural domains, F(1) containing the extramembraneous catalytic core and F(0) containing the membrane proton channel, linked together by a central stalk and a peripheral stalk. During catalysis, ATP synthesis in the catalytic domain of F(1) is coupled via a rotary mechanism of the central stalk subunits to proton translocation. Component of the F(0) channel, it forms part of the peripheral stalk, linking F(1) to F(0). The sequence is that of ATP synthase subunit b from Burkholderia ambifaria (strain MC40-6).